Here is a 69-residue protein sequence, read N- to C-terminus: Small, acid-soluble spore protein I (69 aa).

It belongs to the SspI family.

The protein localises to the spore core. The polypeptide is Small, acid-soluble spore protein I (Shouchella clausii (strain KSM-K16) (Alkalihalobacillus clausii)).